Consider the following 207-residue polypeptide: Small ribosomal subunit protein uS4 (207 aa).

The S4 RNA-binding domain maps to 97–160 (SRLDNVVYRM…KKQARIVEAL (64 aa)).

This sequence belongs to the universal ribosomal protein uS4 family. Part of the 30S ribosomal subunit. Contacts protein S5. The interaction surface between S4 and S5 is involved in control of translational fidelity.

Functionally, one of the primary rRNA binding proteins, it binds directly to 16S rRNA where it nucleates assembly of the body of the 30S subunit. With S5 and S12 plays an important role in translational accuracy. In Burkholderia mallei (strain NCTC 10247), this protein is Small ribosomal subunit protein uS4.